Consider the following 282-residue polypeptide: Malonyl-[acyl-carrier protein] O-methyltransferase 1 (282 aa).

The protein belongs to the methyltransferase superfamily.

The catalysed reaction is malonyl-[ACP] + S-adenosyl-L-methionine = malonyl-[ACP] methyl ester + S-adenosyl-L-homocysteine. The protein operates within cofactor biosynthesis; biotin biosynthesis. Functionally, converts the free carboxyl group of a malonyl-thioester to its methyl ester by transfer of a methyl group from S-adenosyl-L-methionine (SAM). It allows to synthesize pimeloyl-ACP via the fatty acid synthetic pathway. The sequence is that of Malonyl-[acyl-carrier protein] O-methyltransferase 1 from Coxiella burnetii (strain RSA 493 / Nine Mile phase I).